A 513-amino-acid polypeptide reads, in one-letter code: Cytochrome P450 monooxygenase orf3 (513 aa).

Residues 11–31 traverse the membrane as a helical segment; it reads LVALGLIAATIIIYSFTLTVY. 2 N-linked (GlcNAc...) asparagine glycosylation sites follow: Asn-211 and Asn-351. Cys-455 is a binding site for heme.

This sequence belongs to the cytochrome P450 family. Requires heme as cofactor.

It is found in the membrane. It participates in mycotoxin biosynthesis. Functionally, cytochrome P450 monooxygenase; part of the gene cluster that mediates the biosynthesis of brefeldin A (BFA), a protein transport inhibitor that shows antiviral, antifungal, and antitumor properties. The proposed biosynthesis of BFA involves formation of an acyclic polyketide chain that is differentially tailored throughout the backbone. The highly reducing polyketide synthase Bref-PKS is proposed to synthesize the precisely reduced octaketide precursor, which could then be directly offloaded by the thiohydrolase enzyme Bref-TH followed by a cytochrome P450 monooxygenase-mediated formation of the cyclopentane ring and macrocyclization to afford 7-deoxy BFA. Alternatively, the first ring annulation can also occur on the ACP-tethered intermediate before the thiohydrolase release and lactonization. The C7-hydroxylation by another cytochrome P450 monooxygenase is believed to be the final step in the process to obtain the final structure of BFA. In addition to the HRPKS Bref-PKS and the thiohydrolase Bref-TH, the brefeldin A biosynthesis cluster contains 4 cytochrome p450 monooxygenases (called orf3 to orf6), as well a the probable cluster-specific transcription regulator orf8. The polypeptide is Cytochrome P450 monooxygenase orf3 (Eupenicillium brefeldianum (Penicillium brefeldianum)).